A 205-amino-acid polypeptide reads, in one-letter code: Protease (205 aa).

Active-site residues include H54, D71, and C122.

Belongs to the peptidase C5 family. As to quaternary structure, interacts with protease cofactor pVI-C; this interaction is necessary for protease activation.

It localises to the virion. The protein resides in the host nucleus. The enzyme catalyses Cleaves proteins of the adenovirus and its host cell at two consensus sites: -Yaa-Xaa-Gly-Gly-|-Xaa- and -Yaa-Xaa-Gly-Xaa-|-Gly- (in which Yaa is Met, Ile or Leu, and Xaa is any amino acid).. Its activity is regulated as follows. Requires DNA and protease cofactor for maximal activation. Inside nascent virions, becomes partially activated by binding to the viral DNA, allowing it to cleave the cofactor that binds to the protease and fully activates it. Actin, like the viral protease cofactor, seems to act as a cofactor in the cleavage of cytokeratin 18 and of actin itself. In terms of biological role, cleaves viral precursor proteins (pTP, pIIIa, pVI, pVII, pVIII, and pX) inside newly assembled particles giving rise to mature virions. Protease complexed to its cofactor slides along the viral DNA to specifically locate and cleave the viral precursors. Mature virions have a weakened organization compared to the unmature virions, thereby facilitating subsequent uncoating. Without maturation, the particle lacks infectivity and is unable to uncoat. Late in adenovirus infection, in the cytoplasm, may participate in the cytoskeleton destruction. Cleaves host cell cytoskeletal keratins K7 and K18. The protein is Protease of Homo sapiens (Human).